Reading from the N-terminus, the 188-residue chain is Small ribosomal subunit protein bS16 (188 aa).

Positions 155–188 (IAAASATEEAATEEVAEAAEEAPAAEENNETTEA) are disordered. Residues 164 to 188 (AATEEVAEAAEEAPAAEENNETTEA) are compositionally biased toward acidic residues.

Belongs to the bacterial ribosomal protein bS16 family.

The protein is Small ribosomal subunit protein bS16 of Flavobacterium johnsoniae (strain ATCC 17061 / DSM 2064 / JCM 8514 / BCRC 14874 / CCUG 350202 / NBRC 14942 / NCIMB 11054 / UW101) (Cytophaga johnsonae).